The following is a 395-amino-acid chain: Sensor protein DltS (395 aa).

Helical transmembrane passes span 9–29 (FVFLTMSILIVVVLFLFAVSN) and 136–156 (FLILVFTIFGFCLLAAVSLYL). One can recognise a Histidine kinase domain in the interval 177–387 (DASHELKTPI…RLEVQLPIDG (211 aa)). At His-180 the chain carries Phosphohistidine; by autocatalysis.

The protein localises to the cell membrane. The catalysed reaction is ATP + protein L-histidine = ADP + protein N-phospho-L-histidine.. In terms of biological role, member of the two-component regulatory system DltS/DltR. Regulates the expression of the dlt operon. Probably phosphorylates DltR. This Streptococcus agalactiae serotype III (strain NEM316) protein is Sensor protein DltS (dltS).